The chain runs to 330 residues: PDZ and LIM domain protein 4 (330 aa).

The region spanning 1–84 (MTHAVTLRGP…HLTLSVSRPE (84 aa)) is the PDZ domain. Disordered regions lie at residues 104-154 (DPEA…NEVT) and 219-239 (EAGEGGDRPGSGGSRNLKPAA). Residues Ser111, Ser115, Ser118, Ser119, Ser124, and Ser134 each carry the phosphoserine modification. The segment covering 111 to 122 (SPATSRRSSISG) has biased composition (polar residues). In terms of domain architecture, LIM zinc-binding spans 255-305 (CTRCGHGIVGTIVKARDKLYHPECFMCSDCGLNLKQRGYFFLDERLYCENH).

Homodimer. Interacts (via C-terminus only or via combined C-terminus and LIM domain, but not LIM domain only) with PTPN13 (via the second or fourth PDZ domains). Found in a complex with PTPN13 and TRIP6. Interacts (via PDZ domain) with ACTN1 and ACTN2 (via C-terminal SDL residues). Interacts (via PDZ domain) with TRIP6 (via the second LIM domain or via the third LIM domain plus C-terminus). Interacts (via LIM domain) with GRIA1 (via C-terminus); this interaction as well as the interaction with alpha-actinin is required for their colocalization in early endosomes. Interacts with PDLIM1. Forms (via LIM domain) a heterodimer with PDLIM3. Interacts directly with SRC (via kinase domain and to a lesser extent the SH2 domain). In terms of processing, phosphorylated on tyrosine residue(s). Can be dephosphorylated by PTPN13. As to expression, detected in several tissues, most prominent in brain and heart of adults. Expressed in embryonic fibroblasts.

The protein localises to the cytoplasm. Its subcellular location is the cytoskeleton. It localises to the cell projection. It is found in the dendritic spine. The protein resides in the early endosome membrane. The protein localises to the recycling endosome membrane. Its subcellular location is the nucleus. It localises to the perinuclear region. It is found in the lamellipodium. The protein resides in the synapse. The protein localises to the synaptosome. Functionally, suppresses SRC activation by recognizing and binding to active SRC and facilitating PTPN13-mediated dephosphorylation of SRC 'Tyr-419' leading to its inactivation. Inactivated SRC dissociates from this protein allowing the initiation of a new SRC inactivation cycle. Involved in reorganization of the actin cytoskeleton. In nonmuscle cells, binds to ACTN1 (alpha-actinin-1), increases the affinity of ACTN1 to F-actin (filamentous actin), and promotes formation of actin stress fibers. Involved in regulation of the synaptic AMPA receptor transport in dendritic spines of hippocampal pyramidal neurons directing the receptors toward an insertion at the postsynaptic membrane. Links endosomal surface-internalized GRIA1-containing AMPA receptors to the alpha-actinin/actin cytoskeleton. Increases AMPA receptor-mediated excitatory postsynaptic currents in neurons. The protein is PDZ and LIM domain protein 4 (Pdlim4) of Rattus norvegicus (Rat).